Reading from the N-terminus, the 1047-residue chain is MKPPQYRQVPAQVDLPALEHAVLDFWREQKIFAKSLEQSEGRPEWVFYEGPPTANGMPGAHHIEARVFKDVFPRFRTMRGYHVARKAGWDCHGLPVELAVEKELGFSGKQDIEAYGIAEFNAKCRESVTRHTDAFEELTSRMGYWTDLNDPYRTMDPEYIESVWWSLKEIFNKGLLVQDYRVAPWCPQDETGLSDHELAQGYETIVDPSVYVRFPLTSGPLAGRAALLVWTTTPWTLVSNTAVAAHPDVTYVVATNGEEKLVVAEPLVEKALGEGWETTGETFTGAEMERWTYQRPFELVEFPAPAHYVVNAEYVTTEDGTGLVHQSPAFGEDDLKVCREYGLPVVNPVRTNGTFEEDVPLVGGVFFKKADEKLTEDLQNRGLLFKHIPYEHSYPHCWRCHTALLYYAQPSWYIRTTAVKDRLLQENEKTNWFPESVKHGRFGDWLNNNVDWALSRSRFWGTPLPLWTCEEGHLTCVGSRAELSELTGTDQSNLDPHRPFIDAVTFACPQDGCGRTATRVPEVIDAWYDSGSMPFAQWGYPYKNKELFESRYPAQFISEAIDQTRGWFYTLMAVGTLVFDKSSYENVVCLGHILAEDGRKMSKHLGNILQPIPLMDQHGADAVRWFMAAGGSPWAARRVGHGTIQEVVRKTLLTYWNTVAFQALYARTSGWAPSEADPAPADRPVLDRWLLSELHALTDQVTQALESYDTQRAGKLLSAFVDDLSNWYVRRSRRRFWQGDKAALRTLHEVVETVTRLMAPLTPFITERVWQDLVFPVTPGAPESVHLASWPEADLSAIDPELSKQMVLVRRLVELGRATRAESGVKTRQPLSRALVAVAGFETLDRELHAQITEELNVTSLAALSEVGGSLVDTTAKANFRALGKRFGKGVQAVAKAVAGADAAALSLALREGTASVEVDGETVTLAPDEVIITETPREGWSVASDSGATVALDLEITEELRQAGLARDAIRLIQEARKNSGLDVADRIALRWTSTDPEVIAALSEHSELIADEVLATDFAQGEADDTYGEPFTDESLSLTFRLRKA.

A 'HIGH' region motif is present at residues 52–62; that stretch reads PTANGMPGAHH. The 'KMSKS' region signature appears at 600–604; that stretch reads KMSKH. Residue Lys-603 coordinates ATP.

Belongs to the class-I aminoacyl-tRNA synthetase family. IleS type 2 subfamily. In terms of assembly, monomer. The cofactor is Zn(2+).

Its subcellular location is the cytoplasm. The enzyme catalyses tRNA(Ile) + L-isoleucine + ATP = L-isoleucyl-tRNA(Ile) + AMP + diphosphate. Its function is as follows. Catalyzes the attachment of isoleucine to tRNA(Ile). As IleRS can inadvertently accommodate and process structurally similar amino acids such as valine, to avoid such errors it has two additional distinct tRNA(Ile)-dependent editing activities. One activity is designated as 'pretransfer' editing and involves the hydrolysis of activated Val-AMP. The other activity is designated 'posttransfer' editing and involves deacylation of mischarged Val-tRNA(Ile). This Streptomyces avermitilis (strain ATCC 31267 / DSM 46492 / JCM 5070 / NBRC 14893 / NCIMB 12804 / NRRL 8165 / MA-4680) protein is Isoleucine--tRNA ligase.